Consider the following 301-residue polypeptide: Phosducin-like protein (301 aa).

Residue threonine 2 is modified to N-acetylthreonine. The tract at residues 18–57 (SSSEDEDSDHEDKDRGRCAPASSSVPAEAELAGEGISVNT) is disordered. Phosphoserine occurs at positions 20 and 25. Residues 36–49 (APASSSVPAEAELA) show a composition bias toward low complexity. One can recognise a Phosducin domain in the interval 36-299 (APASSSVPAE…TCHSEDSDLE (264 aa)). A phosphoserine mark is found at serine 226, serine 293, and serine 296.

Belongs to the phosducin family. Forms a complex with the beta and gamma subunits of the GTP-binding protein, transducin. Interacts with the CCT chaperonin complex.

It localises to the cell projection. It is found in the cilium. Acts as a positive regulator of hedgehog signaling and regulates ciliary function. Functionally, functions as a co-chaperone for CCT in the assembly of heterotrimeric G protein complexes, facilitates the assembly of both Gbeta-Ggamma and RGS-Gbeta5 heterodimers. In terms of biological role, acts as a negative regulator of heterotrimeric G proteins assembly by trapping the preloaded G beta subunits inside the CCT chaperonin. In Homo sapiens (Human), this protein is Phosducin-like protein (PDCL).